Here is a 377-residue protein sequence, read N- to C-terminus: tRNA-specific 2-thiouridylase MnmA (377 aa).

ATP contacts are provided by residues 16 to 23 and methionine 42; that span reads GMSGGVDS. Residues 102–104 are interaction with target base in tRNA; the sequence is NPD. Cysteine 107 functions as the Nucleophile in the catalytic mechanism. Cysteines 107 and 204 form a disulfide. Glycine 131 provides a ligand contact to ATP. Residues 154-156 form an interaction with tRNA region; the sequence is KDQ. The active-site Cysteine persulfide intermediate is the cysteine 204. The interaction with tRNA stretch occupies residues 315–316; sequence RY.

The protein belongs to the MnmA/TRMU family.

Its subcellular location is the cytoplasm. The enzyme catalyses S-sulfanyl-L-cysteinyl-[protein] + uridine(34) in tRNA + AH2 + ATP = 2-thiouridine(34) in tRNA + L-cysteinyl-[protein] + A + AMP + diphosphate + H(+). In terms of biological role, catalyzes the 2-thiolation of uridine at the wobble position (U34) of tRNA, leading to the formation of s(2)U34. This chain is tRNA-specific 2-thiouridylase MnmA, found in Lacticaseibacillus paracasei (strain ATCC 334 / BCRC 17002 / CCUG 31169 / CIP 107868 / KCTC 3260 / NRRL B-441) (Lactobacillus paracasei).